Consider the following 159-residue polypeptide: Putative ribosomal RNA large subunit methyltransferase H (159 aa).

S-adenosyl-L-methionine is bound by residues L76, G108, and 127–132 (FSKMTF).

The protein belongs to the RNA methyltransferase RlmH family.

Its subcellular location is the cytoplasm. It catalyses the reaction pseudouridine(1915) in 23S rRNA + S-adenosyl-L-methionine = N(3)-methylpseudouridine(1915) in 23S rRNA + S-adenosyl-L-homocysteine + H(+). Its function is as follows. Specifically methylates the pseudouridine at position 1915 (m3Psi1915) in 23S rRNA. The polypeptide is Putative ribosomal RNA large subunit methyltransferase H (Methanococcus maripaludis (strain C6 / ATCC BAA-1332)).